The primary structure comprises 105 residues: Nucleoid-associated protein lin2851 (105 aa).

Low complexity predominate over residues 1 to 16 (MRGMGNMQGMMKQMQK). Positions 1–23 (MRGMGNMQGMMKQMQKMQKEMAK) are disordered.

Belongs to the YbaB/EbfC family. Homodimer.

The protein localises to the cytoplasm. It localises to the nucleoid. In terms of biological role, binds to DNA and alters its conformation. May be involved in regulation of gene expression, nucleoid organization and DNA protection. In Listeria innocua serovar 6a (strain ATCC BAA-680 / CLIP 11262), this protein is Nucleoid-associated protein lin2851.